The chain runs to 125 residues: Phosphoribosyl-AMP cyclohydrolase (125 aa).

D74 is a Mg(2+) binding site. Position 75 (C75) interacts with Zn(2+). Mg(2+) contacts are provided by D76 and D78. The Zn(2+) site is built by C92 and C99.

The protein belongs to the PRA-CH family. Homodimer. Mg(2+) serves as cofactor. Requires Zn(2+) as cofactor.

Its subcellular location is the cytoplasm. It catalyses the reaction 1-(5-phospho-beta-D-ribosyl)-5'-AMP + H2O = 1-(5-phospho-beta-D-ribosyl)-5-[(5-phospho-beta-D-ribosylamino)methylideneamino]imidazole-4-carboxamide. The protein operates within amino-acid biosynthesis; L-histidine biosynthesis; L-histidine from 5-phospho-alpha-D-ribose 1-diphosphate: step 3/9. Functionally, catalyzes the hydrolysis of the adenine ring of phosphoribosyl-AMP. This is Phosphoribosyl-AMP cyclohydrolase from Geotalea uraniireducens (strain Rf4) (Geobacter uraniireducens).